Reading from the N-terminus, the 141-residue chain is ATP synthase epsilon chain (141 aa).

Belongs to the ATPase epsilon chain family. In terms of assembly, F-type ATPases have 2 components, CF(1) - the catalytic core - and CF(0) - the membrane proton channel. CF(1) has five subunits: alpha(3), beta(3), gamma(1), delta(1), epsilon(1). CF(0) has three main subunits: a, b and c.

Its subcellular location is the cell inner membrane. Functionally, produces ATP from ADP in the presence of a proton gradient across the membrane. The chain is ATP synthase epsilon chain from Halorhodospira halophila (strain DSM 244 / SL1) (Ectothiorhodospira halophila (strain DSM 244 / SL1)).